The chain runs to 115 residues: T cell receptor beta variable 12-5 (115 aa).

The first 21 residues, 1–21 (MATRLLCCVVLCLLGEELIDA), serve as a signal peptide directing secretion. The region spanning 22-115 (RVTQTPRHKV…SAVYFCASGL (94 aa)) is the Ig-like domain. The cysteines at positions 42 and 111 are disulfide-linked.

In terms of assembly, alpha-beta TR is a heterodimer composed of an alpha and beta chain; disulfide-linked. The alpha-beta TR is associated with the transmembrane signaling CD3 coreceptor proteins to form the TR-CD3 (TcR or TCR). The assembly of alpha-beta TR heterodimers with CD3 occurs in the endoplasmic reticulum where a single alpha-beta TR heterodimer associates with one CD3D-CD3E heterodimer, one CD3G-CD3E heterodimer and one CD247 homodimer forming a stable octameric structure. CD3D-CD3E and CD3G-CD3E heterodimers preferentially associate with TR alpha and TR beta chains, respectively. The association of the CD247 homodimer is the last step of TcR assembly in the endoplasmic reticulum and is required for transport to the cell surface.

It localises to the cell membrane. V region of the variable domain of T cell receptor (TR) beta chain that participates in the antigen recognition. Alpha-beta T cell receptors are antigen specific receptors which are essential to the immune response and are present on the cell surface of T lymphocytes. Recognize peptide-major histocompatibility (MH) (pMH) complexes that are displayed by antigen presenting cells (APC), a prerequisite for efficient T cell adaptive immunity against pathogens. Binding of alpha-beta TR to pMH complex initiates TR-CD3 clustering on the cell surface and intracellular activation of LCK that phosphorylates the ITAM motifs of CD3G, CD3D, CD3E and CD247 enabling the recruitment of ZAP70. In turn ZAP70 phosphorylates LAT, which recruits numerous signaling molecules to form the LAT signalosome. The LAT signalosome propagates signal branching to three major signaling pathways, the calcium, the mitogen-activated protein kinase (MAPK) kinase and the nuclear factor NF-kappa-B (NF-kB) pathways, leading to the mobilization of transcription factors that are critical for gene expression and essential for T cell growth and differentiation. The T cell repertoire is generated in the thymus, by V-(D)-J rearrangement. This repertoire is then shaped by intrathymic selection events to generate a peripheral T cell pool of self-MH restricted, non-autoaggressive T cells. Post-thymic interaction of alpha-beta TR with the pMH complexes shapes TR structural and functional avidity. The sequence is that of T cell receptor beta variable 12-5 from Homo sapiens (Human).